A 169-amino-acid polypeptide reads, in one-letter code: Thaumatin-like pathogenesis-related protein 3 (169 aa).

A signal peptide spans 1–21 (MATSSAVLFLLLAVFAAGASA).

It belongs to the thaumatin family.

Associated with resistance against stem rust fungi. The chain is Thaumatin-like pathogenesis-related protein 3 (RASTL-3) from Avena sativa (Oat).